The primary structure comprises 507 residues: Sterol 14-alpha demethylase CYP51A (507 aa).

A helical membrane pass occupies residues 7-29 (YPLWVLVALFAVIIANLLYQQLP). Residue Tyr105 coordinates lanosterol. Cys449 contacts heme.

Belongs to the cytochrome P450 family. The cofactor is heme.

It localises to the endoplasmic reticulum membrane. The enzyme catalyses a 14alpha-methyl steroid + 3 reduced [NADPH--hemoprotein reductase] + 3 O2 = a Delta(14) steroid + formate + 3 oxidized [NADPH--hemoprotein reductase] + 4 H2O + 4 H(+). It carries out the reaction a 14alpha-methyl steroid + reduced [NADPH--hemoprotein reductase] + O2 = a 14alpha-hydroxymethyl steroid + oxidized [NADPH--hemoprotein reductase] + H2O + H(+). The catalysed reaction is a 14alpha-hydroxymethyl steroid + reduced [NADPH--hemoprotein reductase] + O2 = a 14alpha-formyl steroid + oxidized [NADPH--hemoprotein reductase] + 2 H2O + H(+). It catalyses the reaction a 14alpha-formyl steroid + reduced [NADPH--hemoprotein reductase] + O2 = a Delta(14) steroid + formate + oxidized [NADPH--hemoprotein reductase] + H2O + 2 H(+). The enzyme catalyses lanosterol + 3 reduced [NADPH--hemoprotein reductase] + 3 O2 = 4,4-dimethyl-5alpha-cholesta-8,14,24-trien-3beta-ol + formate + 3 oxidized [NADPH--hemoprotein reductase] + 4 H2O + 4 H(+). It carries out the reaction lanosterol + reduced [NADPH--hemoprotein reductase] + O2 = 32-hydroxylanosterol + oxidized [NADPH--hemoprotein reductase] + H2O + H(+). The catalysed reaction is 32-hydroxylanosterol + reduced [NADPH--hemoprotein reductase] + O2 = 32-oxolanosterol + oxidized [NADPH--hemoprotein reductase] + 2 H2O + H(+). It catalyses the reaction 32-oxolanosterol + reduced [NADPH--hemoprotein reductase] + O2 = 4,4-dimethyl-5alpha-cholesta-8,14,24-trien-3beta-ol + formate + oxidized [NADPH--hemoprotein reductase] + H2O + 2 H(+). The enzyme catalyses eburicol + 3 reduced [NADPH--hemoprotein reductase] + 3 O2 = 14-demethyleburicol + formate + 3 oxidized [NADPH--hemoprotein reductase] + 4 H2O + 4 H(+). It carries out the reaction eburicol + reduced [NADPH--hemoprotein reductase] + O2 = 32-hydroxyeburicol + oxidized [NADPH--hemoprotein reductase] + H2O + H(+). The catalysed reaction is 32-hydroxyeburicol + reduced [NADPH--hemoprotein reductase] + O2 = 32-oxoeburicol + oxidized [NADPH--hemoprotein reductase] + 2 H2O + H(+). It catalyses the reaction 32-oxoeburicol + reduced [NADPH--hemoprotein reductase] + O2 = 14-demethyleburicol + formate + oxidized [NADPH--hemoprotein reductase] + H2O + 2 H(+). The protein operates within steroid metabolism; ergosterol biosynthesis. Together with cyp51B and cyp51C, encodes the sterol 14alpha-demethylase that plays a critical role in the third module of ergosterol biosynthesis pathway, being ergosterol the major sterol component in fungal membranes that participates in a variety of functions. CYP51A encodes the sterol 14-alpha-demethylase induced on ergosterol depletion and is responsible for the intrinsic variation in azole sensitivity. The third module or late pathway involves the ergosterol synthesis itself through consecutive reactions that mainly occur in the endoplasmic reticulum (ER) membrane. In filamentous fungi, during the initial step of this module, lanosterol (lanosta-8,24-dien-3beta-ol) can be metabolized to eburicol. Sterol 14alpha-demethylase catalyzes the three-step oxidative removal of the 14alpha-methyl group (C-32) of both these sterols in the form of formate, and converts eburicol and lanosterol to 14-demethyleburicol (4,4,24-trimethylergosta-8,14,24(28)-trienol) and 4,4-dimethyl-5alpha-cholesta-8,14,24-trien-3beta-ol, respectively, which are further metabolized by other enzymes in the pathway to ergosterol. Can also use substrates not intrinsic to fungi, such as 24,25-dihydrolanosterol (DHL), producing 4,4'-dimethyl-8,14-cholestadien-3-beta-ol, but at lower rates than the endogenous substrates. This is Sterol 14-alpha demethylase CYP51A from Gibberella zeae (strain ATCC MYA-4620 / CBS 123657 / FGSC 9075 / NRRL 31084 / PH-1) (Wheat head blight fungus).